The following is a 313-amino-acid chain: Probable inactive peptidyl-prolyl cis-trans isomerase-like 6 (313 aa).

The PPIase cyclophilin-type domain occupies Tyr147 to Val310.

This sequence belongs to the cyclophilin-type PPIase family.

Probable inactive PPIase with no peptidyl-prolyl cis-trans isomerase activity. The protein is Probable inactive peptidyl-prolyl cis-trans isomerase-like 6 of Mus musculus (Mouse).